The sequence spans 367 residues: Chorismate synthase (367 aa).

Residues Arg48 and Arg54 each coordinate NADP(+). Residues 125 to 127, 238 to 239, Gly278, 293 to 297, and Arg319 each bind FMN; these read RSS, NA, and KPTSS.

Belongs to the chorismate synthase family. Homotetramer. FMNH2 serves as cofactor.

It catalyses the reaction 5-O-(1-carboxyvinyl)-3-phosphoshikimate = chorismate + phosphate. It functions in the pathway metabolic intermediate biosynthesis; chorismate biosynthesis; chorismate from D-erythrose 4-phosphate and phosphoenolpyruvate: step 7/7. Its function is as follows. Catalyzes the anti-1,4-elimination of the C-3 phosphate and the C-6 proR hydrogen from 5-enolpyruvylshikimate-3-phosphate (EPSP) to yield chorismate, which is the branch point compound that serves as the starting substrate for the three terminal pathways of aromatic amino acid biosynthesis. This reaction introduces a second double bond into the aromatic ring system. This Stenotrophomonas maltophilia (strain R551-3) protein is Chorismate synthase.